A 46-amino-acid polypeptide reads, in one-letter code: Esculentin-1 (46 aa).

Cysteines 40 and 46 form a disulfide.

It belongs to the frog skin active peptide (FSAP) family. Brevinin subfamily. As to expression, expressed by the skin glands.

The protein localises to the secreted. Shows antibacterial activity against representative Gram-negative and Gram-positive bacterial species, and hemolytic activity. The chain is Esculentin-1 from Pelophylax lessonae (Pool frog).